The primary structure comprises 562 residues: NAD-dependent malic enzyme (562 aa).

Tyr-101 acts as the Proton donor in catalysis. Arg-154 provides a ligand contact to NAD(+). Lys-172 (proton acceptor) is an active-site residue. 3 residues coordinate a divalent metal cation: Glu-243, Asp-244, and Asp-267. NAD(+) is bound by residues Asp-267 and Asn-415.

It belongs to the malic enzymes family. Homotetramer. Mg(2+) is required as a cofactor. The cofactor is Mn(2+).

The enzyme catalyses (S)-malate + NAD(+) = pyruvate + CO2 + NADH. The catalysed reaction is oxaloacetate + H(+) = pyruvate + CO2. The sequence is that of NAD-dependent malic enzyme from Shewanella sediminis (strain HAW-EB3).